A 377-amino-acid chain; its full sequence is Proteinase-activated receptor 3 (377 aa).

The signal sequence occupies residues 1-19 (MRAAIFAAIGALLLSPASC). A propeptide spans 20-38 (QSGMEYDADNLAKPTLSIK) (removed for receptor activation). Topologically, residues 39–94 (TFRGAPQNSFEEFPLSAIEGWTGTTKTVKIKCPEELDSNLHVNNATMGYLSSPLST) are extracellular. An N-linked (GlcNAc...) asparagine glycan is attached at Asn-82. A helical transmembrane segment spans residues 95–120 (KLIPAIYILVFAVGMPANAVTLWMLF). The Cytoplasmic segment spans residues 121–127 (RTRTIRM). A helical membrane pass occupies residues 128 to 147 (TIFYTNLAIADFLFCVTLPF). At 148-166 (RIAYHLNGNNWVFGEVMCR) the chain is on the extracellular side. Cys-165 and Cys-244 are oxidised to a cystine. The helical transmembrane segment at 167–188 (ATTVIFYGNMYCSILLLACISI) threads the bilayer. Topologically, residues 189 to 205 (NRYLAIVHPFTYRGLPK) are cytoplasmic. Residues 206 to 229 (RTYALLTCGLVWTTVFLYMLPFFI) form a helical membrane-spanning segment. Over 230 to 259 (LKQEYYLVQQDITTCHDVHNTCESSSPFQL) the chain is Extracellular. A helical membrane pass occupies residues 260–279 (YYFISLAFFGFLIPFLVIIY). The Cytoplasmic segment spans residues 280 to 296 (CYTAIIWTLNAKDRRWL). The helical transmembrane segment at 297–321 (WYIKASLLTFVIFTICFAPSNIILI) threads the bilayer. Over 322 to 335 (IHHANYYYSNTDAL) the chain is Extracellular. The helical transmembrane segment at 336–360 (YFVYLIALCLGSLNSCLDPFLYFLM) threads the bilayer. The Cytoplasmic portion of the chain corresponds to 361–377 (SKITDHSTAYLTMVKLS).

It belongs to the G-protein coupled receptor 1 family. As to quaternary structure, interacts with INSC/inscuteable and GPSM2. Post-translationally, a proteolytic cleavage generates a new N-terminus that functions as a tethered ligand.

The protein resides in the cell membrane. Functionally, receptor for activated thrombin coupled to G proteins that stimulate phosphoinositide hydrolysis. The polypeptide is Proteinase-activated receptor 3 (F2RL2) (Bos taurus (Bovine)).